The primary structure comprises 584 residues: Glycosyltransferase family 92 protein Os08g0121900 (584 aa).

The segment covering 1–10 (MALAAKERKL) has biased composition (basic and acidic residues). The segment at 1 to 33 (MALAAKERKLSRLGSKGSGGGGGGGSFGARGQR) is disordered. Positions 16 to 28 (KGSGGGGGGGSFG) are enriched in gly residues. The chain crosses the membrane as a helical span at residues 43–63 (FAAFFAFLFAGAVLFGAAHVI). Positions 314-525 (HSMCVCTMLR…DKFSGRVATY (212 aa)) constitute a GT92 domain.

It belongs to the glycosyltransferase 92 family.

The protein resides in the membrane. This chain is Glycosyltransferase family 92 protein Os08g0121900, found in Oryza sativa subsp. japonica (Rice).